The primary structure comprises 508 residues: Ribonuclease Y (508 aa).

A helical membrane pass occupies residues 1–21 (MMLWYIVAGAGGLLIGYLIAN). One can recognise a KH domain in the interval 198 to 283 (TVSTVSLPSD…EMYEKAKQEV (86 aa)). Positions 324–417 (VLNHSIEVAL…VAAADALSAA (94 aa)) constitute an HD domain.

The protein belongs to the RNase Y family.

The protein localises to the cell membrane. In terms of biological role, endoribonuclease that initiates mRNA decay. The protein is Ribonuclease Y of Thermotoga maritima (strain ATCC 43589 / DSM 3109 / JCM 10099 / NBRC 100826 / MSB8).